Here is a 460-residue protein sequence, read N- to C-terminus: Bifunctional protein GlmU (460 aa).

The tract at residues Met1–Leu228 is pyrophosphorylase. Residues Leu8–Gly11, Lys22, Gln72, and Gly77–Thr78 contribute to the UDP-N-acetyl-alpha-D-glucosamine site. Asp102 lines the Mg(2+) pocket. Positions 139, 154, 169, and 226 each coordinate UDP-N-acetyl-alpha-D-glucosamine. Asn226 lines the Mg(2+) pocket. The interval Tyr229–Asn249 is linker. The tract at residues Gly250–Glu460 is N-acetyltransferase. The UDP-N-acetyl-alpha-D-glucosamine site is built by Arg331 and Lys349. The active-site Proton acceptor is His361. Residues Tyr364 and Asn375 each coordinate UDP-N-acetyl-alpha-D-glucosamine. Residues Asn384 to Tyr385, Ala421, and Arg438 contribute to the acetyl-CoA site.

In the N-terminal section; belongs to the N-acetylglucosamine-1-phosphate uridyltransferase family. The protein in the C-terminal section; belongs to the transferase hexapeptide repeat family. Homotrimer. Mg(2+) is required as a cofactor.

It is found in the cytoplasm. The enzyme catalyses alpha-D-glucosamine 1-phosphate + acetyl-CoA = N-acetyl-alpha-D-glucosamine 1-phosphate + CoA + H(+). It carries out the reaction N-acetyl-alpha-D-glucosamine 1-phosphate + UTP + H(+) = UDP-N-acetyl-alpha-D-glucosamine + diphosphate. It functions in the pathway nucleotide-sugar biosynthesis; UDP-N-acetyl-alpha-D-glucosamine biosynthesis; N-acetyl-alpha-D-glucosamine 1-phosphate from alpha-D-glucosamine 6-phosphate (route II): step 2/2. It participates in nucleotide-sugar biosynthesis; UDP-N-acetyl-alpha-D-glucosamine biosynthesis; UDP-N-acetyl-alpha-D-glucosamine from N-acetyl-alpha-D-glucosamine 1-phosphate: step 1/1. The protein operates within bacterial outer membrane biogenesis; LPS lipid A biosynthesis. In terms of biological role, catalyzes the last two sequential reactions in the de novo biosynthetic pathway for UDP-N-acetylglucosamine (UDP-GlcNAc). The C-terminal domain catalyzes the transfer of acetyl group from acetyl coenzyme A to glucosamine-1-phosphate (GlcN-1-P) to produce N-acetylglucosamine-1-phosphate (GlcNAc-1-P), which is converted into UDP-GlcNAc by the transfer of uridine 5-monophosphate (from uridine 5-triphosphate), a reaction catalyzed by the N-terminal domain. This chain is Bifunctional protein GlmU, found in Acholeplasma laidlawii (strain PG-8A).